We begin with the raw amino-acid sequence, 310 residues long: AA9 family lytic polysaccharide monooxygenase A (310 aa).

Residues 1–21 (MPSTKVAALSAVLALASTVAG) form the signal peptide. Cu(2+)-binding residues include His22 and His107. 2 disulfide bridges follow: Cys77–Cys199 and Cys118–Cys122. N-linked (GlcNAc...) asparagine glycans are attached at residues Asn121 and Asn159. His185 is a binding site for O2. Tyr196 contacts Cu(2+).

This sequence belongs to the polysaccharide monooxygenase AA9 family. Requires Cu(2+) as cofactor.

The protein localises to the secreted. It carries out the reaction [(1-&gt;4)-beta-D-glucosyl]n+m + reduced acceptor + O2 = 4-dehydro-beta-D-glucosyl-[(1-&gt;4)-beta-D-glucosyl]n-1 + [(1-&gt;4)-beta-D-glucosyl]m + acceptor + H2O.. In terms of biological role, lytic polysaccharide monooxygenase (LPMO) that depolymerizes crystalline and amorphous polysaccharides via the oxidation of scissile alpha- or beta-(1-4)-glycosidic bonds, yielding C1, C4 as well as C6 oxidation products. Catalysis by LPMOs requires the reduction of the active-site copper from Cu(II) to Cu(I) by a reducing agent and H(2)O(2) or O(2) as a cosubstrate. Active on cellulose, but not on xylan, starch, or chitin. This chain is AA9 family lytic polysaccharide monooxygenase A, found in Talaromyces pinophilus (Penicillium pinophilum).